The following is a 971-amino-acid chain: uncharacterized protein (971 aa).

This is an uncharacterized protein from Borreliella burgdorferi (strain ATCC 35210 / DSM 4680 / CIP 102532 / B31) (Borrelia burgdorferi).